The primary structure comprises 614 residues: Probable peptide-binding protein YejA (614 aa).

The N-terminal stretch at 1 to 27 (MILAPLKSRILIALAASALLIPAVASA) is a signal peptide.

It belongs to the bacterial solute-binding protein 5 family. The complex is composed of one ATP-binding protein (YejF), two transmembrane proteins (YejB and YejE) and a solute-binding protein (YejA).

Its subcellular location is the periplasm. In terms of biological role, probably part of the ABC transporter complex YejABEF, which is likely involved in broad-spectrum peptide import. The polypeptide is Probable peptide-binding protein YejA (Agrobacterium fabrum (strain C58 / ATCC 33970) (Agrobacterium tumefaciens (strain C58))).